The following is a 300-amino-acid chain: F-box/LRR-repeat protein 15 (300 aa).

N-acetylmethionine is present on methionine 1. The F-box domain maps to 19–66 (LLDLPWEDVLLPHVLSRVPLRQLLWLQRVSRAFRALVQLHLARLRRFD). The segment at 113–269 (NPQLRSVALA…EPSLSRLRKR (157 aa)) is interaction with SMURF1. LRR repeat units follow at residues 141 to 162 (RLQRLSLAHCDWVDGLALRGLA), 167 to 188 (ALEELDLTACRQLKDEAIVYLA), 194 to 215 (GLRNLSLAVNANVGDTAVQELA), 220 to 241 (ELQHLDLTGCLRVGSDGIRTLA), and 246 to 267 (ALRSLRVRHCHHVAEPSLSRLR).

Belongs to the FBXL15 family. As to quaternary structure, part of the SCF (SKP1-CUL1-F-box) E3 ubiquitin-protein ligase complex SCF(FBXL15) composed of CUL1, SKP1, RBX1 and FBXL15.

It localises to the cytoplasm. Its pathway is protein modification; protein ubiquitination. In terms of biological role, substrate recognition component of a SCF (SKP1-CUL1-F-box protein) E3 ubiquitin-protein ligase complex which mediates the ubiquitination and subsequent proteasomal degradation of SMURF1, thereby acting as a positive regulator of the BMP signaling pathway. Required for dorsal/ventral pattern formation and bone mass maintenance. Also mediates ubiquitination of SMURF2 and WWP2. The chain is F-box/LRR-repeat protein 15 (FBXL15) from Bos taurus (Bovine).